The primary structure comprises 260 residues: Snake venom serine protease KN5 (260 aa).

The first 18 residues, 1–18, serve as a signal peptide directing secretion; sequence MVLIRVLANLLILQLSYA. Positions 19–24 are excised as a propeptide; the sequence is QKSSEL. In terms of domain architecture, Peptidase S1 spans 25–251; that stretch reads VIGGDECNIN…HLDWIQSIIA (227 aa). 5 disulfide bridges follow: C31–C165, C100–C258, C144–C212, C176–C191, and C202–C227. The active-site Charge relay system is the H67. An N-linked (GlcNAc...) asparagine glycan is attached at N105. Residue D112 is the Charge relay system of the active site. Residues N124 and N172 are each glycosylated (N-linked (GlcNAc...) asparagine). Catalysis depends on S206, which acts as the Charge relay system. Residues N213 and N255 are each glycosylated (N-linked (GlcNAc...) asparagine).

The protein belongs to the peptidase S1 family. Snake venom subfamily. As to quaternary structure, monomer. Expressed by the venom gland.

It is found in the secreted. In terms of biological role, snake venom serine protease that may act in the hemostasis system of the prey. In Trimeresurus stejnegeri (Chinese green tree viper), this protein is Snake venom serine protease KN5.